Reading from the N-terminus, the 228-residue chain is Ribonuclease 3 (228 aa).

Residues Leu7–Gly136 enclose the RNase III domain. Glu49 lines the Mg(2+) pocket. Residue Asp53 is part of the active site. Mg(2+) contacts are provided by Asp122 and Glu125. Residue Glu125 is part of the active site. Residues Asp162–Glu228 form the DRBM domain. Residues Gly207–Glu228 are disordered. The segment covering Glu216–Glu228 has biased composition (low complexity).

Belongs to the ribonuclease III family. As to quaternary structure, homodimer. It depends on Mg(2+) as a cofactor.

Its subcellular location is the cytoplasm. The enzyme catalyses Endonucleolytic cleavage to 5'-phosphomonoester.. Digests double-stranded RNA. Involved in the processing of primary rRNA transcript to yield the immediate precursors to the large and small rRNAs (23S and 16S). Processes some mRNAs, and tRNAs when they are encoded in the rRNA operon. Processes pre-crRNA and tracrRNA of type II CRISPR loci if present in the organism. This is Ribonuclease 3 from Lactobacillus acidophilus (strain ATCC 700396 / NCK56 / N2 / NCFM).